Reading from the N-terminus, the 365-residue chain is Ribosomal RNA large subunit methyltransferase F (365 aa).

Residues 1-50 (MSKPAVKSVPSATAKTATRAVNIRQKVKAPKQAKPEAKGRAKPSKDKPRA) are disordered. Positions 33 to 50 (AKPEAKGRAKPSKDKPRA) are enriched in basic and acidic residues.

The protein belongs to the methyltransferase superfamily. METTL16/RlmF family.

The protein localises to the cytoplasm. The catalysed reaction is adenosine(1618) in 23S rRNA + S-adenosyl-L-methionine = N(6)-methyladenosine(1618) in 23S rRNA + S-adenosyl-L-homocysteine + H(+). In terms of biological role, specifically methylates the adenine in position 1618 of 23S rRNA. In Shewanella baltica (strain OS155 / ATCC BAA-1091), this protein is Ribosomal RNA large subunit methyltransferase F.